The sequence spans 297 residues: Glucuronoxylan 4-O-methyltransferase 3 (297 aa).

The chain crosses the membrane as a helical span at residues Leu9–Ala29. The segment covering Ser35–Ser47 has biased composition (low complexity). The disordered stretch occupies residues Ser35–Thr63.

It belongs to the methyltransferase superfamily. Expressed in hypocotyls, roots, rosette leaves, stems and siliques.

The protein resides in the golgi apparatus membrane. The catalysed reaction is glucuronoxylan D-glucuronate + n S-adenosyl-L-methionine = glucuronoxylan 4-O-methyl-D-glucuronate + n S-adenosyl-L-homocysteine + n H(+). In terms of biological role, methyltransferase catalyzing 4-O-methylation of glucuronic acid side chains on xylan. This Arabidopsis thaliana (Mouse-ear cress) protein is Glucuronoxylan 4-O-methyltransferase 3 (GXM3).